A 204-amino-acid polypeptide reads, in one-letter code: Transcriptional regulator GfcR 1 (204 aa).

Belongs to the purine/pyrimidine phosphoribosyltransferase family. GfcR subfamily.

This Methanosarcina barkeri (strain Fusaro / DSM 804) protein is Transcriptional regulator GfcR 1.